We begin with the raw amino-acid sequence, 286 residues long: Probable aquaporin-3 (286 aa).

Positions 1–34 (MADTYGMNGHNGHVKDRRSSSMNGRNRLYAQQEP) are disordered. Residues 1-52 (MADTYGMNGHNGHVKDRRSSSMNGRNRLYAQQEPQRTTHLSEFGKHMVAASG) lie on the Cytoplasmic side of the membrane. A helical membrane pass occupies residues 53-73 (EFVGTFLFLYFGYAGNIVAVL). At 74-87 (QEPISGPNGTLANN) the chain is on the extracellular side. N-linked (GlcNAc...) asparagine glycans are attached at residues N81 and N86. Residues 88–108 (TVMYIAMAYGFSLLVNVWTFY) form a helical membrane-spanning segment. Topologically, residues 109–135 (RISGGLFNPAVTFGLCLSGQLPWIRAL) are cytoplasmic. An NPA 1 motif is present at residues 116 to 118 (NPA). Residues 136 to 156 (FLFPSQIIAAMCAGGLVNAMF) traverse the membrane as a helical segment. Residues 157-175 (PGSASIANTTLGPNTSIAQ) lie on the Extracellular side of the membrane. 2 N-linked (GlcNAc...) asparagine glycosylation sites follow: N164 and N170. A helical transmembrane segment spans residues 176–196 (GVFLEMFFTAQLVFVVLMLAA). Residues 197-202 (EKSRDT) lie on the Cytoplasmic side of the membrane. The chain crosses the membrane as a helical span at residues 203 to 223 (FLAPVGIGLALFVALIPGVFV). Topologically, residues 224-244 (TGGSANPVRSFGCAVGSRDFP) are extracellular. An NPA 2 motif is present at residues 229–231 (NPV). A helical transmembrane segment spans residues 245–265 (GYHWIYWVGPLLGAALAAGYF). The Cytoplasmic portion of the chain corresponds to 266–286 (RLVKMMHYEEANPGQDSPVDV).

The protein belongs to the MIP/aquaporin (TC 1.A.8) family.

The protein localises to the membrane. The enzyme catalyses H2O(in) = H2O(out). Its function is as follows. Probable water channel that may have redundant functions with FgAQP5. This chain is Probable aquaporin-3, found in Gibberella zeae (strain ATCC MYA-4620 / CBS 123657 / FGSC 9075 / NRRL 31084 / PH-1) (Wheat head blight fungus).